Consider the following 217-residue polypeptide: GTP-binding protein Rit2 (217 aa).

Residues 27–34, 74–78, and 133–136 each bind GTP; these read GAGGVGKS, DTAGQ, and NKID.

Belongs to the small GTPase superfamily. Ras family. Interacts with PLXNB3. Interacts with AFDN, the C-terminal domain of RALGDS and RLF, but not with RIN1 and PIK3CA. RLF binds exclusively to the active GTP-bound form. Binds calmodulin. Interacts with POU4F1 (via N-terminus); the interaction controls POU4F1 transactivation activity on some neuronal target genes. Expressed in ganglion cell layer (GCL), inner plexiform layer (IPL) and inner nuclear layer (INL) of the retina. Expressed in retinal ganglion cells (RGCs). Expressed in horizontal, bipolar and amacrine cells, but not Mueller glia, of the INL (at protein level). Neuron-specific. Expressed in ganglion cell layer (GCL) and inner plexiform layer (IPL).

The protein localises to the nucleus. It is found in the cell membrane. The enzyme catalyses GTP + H2O = GDP + phosphate + H(+). With respect to regulation, alternates between an inactive form bound to GDP and an active form bound to GTP. Functionally, binds and exchanges GTP and GDP. Binds and modulates the activation of POU4F1 as gene expression regulator. The sequence is that of GTP-binding protein Rit2 (Rit2) from Mus musculus (Mouse).